The chain runs to 169 residues: Ubiquitin-conjugating enzyme E2 2 (169 aa).

Residues 4–150 (AAKRRLIRDF…VKKTVELSWV (147 aa)) enclose the UBC core domain. The Glycyl thioester intermediate role is filled by Cys-88.

This sequence belongs to the ubiquitin-conjugating enzyme family.

The protein resides in the cytoplasm. The protein localises to the nucleus. It catalyses the reaction S-ubiquitinyl-[E1 ubiquitin-activating enzyme]-L-cysteine + [E2 ubiquitin-conjugating enzyme]-L-cysteine = [E1 ubiquitin-activating enzyme]-L-cysteine + S-ubiquitinyl-[E2 ubiquitin-conjugating enzyme]-L-cysteine.. It functions in the pathway protein modification; protein ubiquitination. Functionally, catalyzes the covalent attachment of ubiquitin to other proteins. Plays a role in transcription regulation by catalyzing the monoubiquitination of histone H2B to form H2BK123ub1. H2BK123ub1 gives a specific tag for epigenetic transcriptional activation and is also a prerequisite for H3K4me and H3K79me formation. Also involved in postreplication repair of UV-damaged DNA, in N-end rule-dependent protein degradation and in sporulation. In Cryptococcus neoformans var. neoformans serotype D (strain B-3501A) (Filobasidiella neoformans), this protein is Ubiquitin-conjugating enzyme E2 2 (UBC2).